The sequence spans 440 residues: Xylose isomerase (440 aa).

Active-site residues include histidine 100 and aspartate 103. The Mg(2+) site is built by glutamate 231, glutamate 267, histidine 270, aspartate 295, aspartate 306, aspartate 308, and aspartate 338.

The protein belongs to the xylose isomerase family. As to quaternary structure, homotetramer. Mg(2+) is required as a cofactor.

Its subcellular location is the cytoplasm. It carries out the reaction alpha-D-xylose = alpha-D-xylulofuranose. This is Xylose isomerase from Burkholderia ambifaria (strain MC40-6).